The primary structure comprises 138 residues: Endoribonuclease YbeY (138 aa).

Residues histidine 105, histidine 109, and aspartate 115 each contribute to the Zn(2+) site.

The protein belongs to the endoribonuclease YbeY family. It depends on Zn(2+) as a cofactor.

It localises to the cytoplasm. In terms of biological role, single strand-specific metallo-endoribonuclease involved in late-stage 70S ribosome quality control and in maturation of the 3' terminus of the 16S rRNA. The sequence is that of Endoribonuclease YbeY from Chlorobium phaeobacteroides (strain BS1).